A 520-amino-acid chain; its full sequence is MGELLSFQIFINEPVELLNLSLNAKAVLPEAAVLMAMLGTLLVDLAGEKISARWSPPICYAGLGSALILLAMQWDGEIQESFLGAFIADNLAIAFRGVIVLSTLISLLISWRYADQNGSPIGEFAAILLAATLGAMLLCGSTDLVSVFVSLETLSVASYLLSGYLKRDSRSSEAALKYLLVGSAAAAVFLYGASLLYGISGSTNLKEIGTTLLSAPTPLSALALVFVLSTVAFKIAAVPFHQWTPDVYEGSPTPVVAFLSVGSKAAGFALAIRILVGCFSAFDTQWKLLFTVLAVLSMSLGNVVALAQKSMKRMLAYSSIGQAGFVMIGLVCGTEDGFAAMVLYMAAYLFMNLGAFACIILFSIRTGSDQISDYAGLYQKDPLITLGLSLCLLSLGGIPPMLGFFGKIYLFFAGWADGQYLLVTVGLVTSVISIYYYISVIKMMVVTEPKEASDVVKAYPSIEWSIPGMSSLKVALIFCVLVTAIGGIISNPLFNFADSAVNGTPLLREAITLASKSSIG.

The next 14 membrane-spanning stretches (helical) occupy residues 26–46 (AVLPEAAVLMAMLGTLLVDLA), 54–74 (WSPPICYAGLGSALILLAMQW), 91–111 (LAIAFRGVIVLSTLISLLISW), 120–140 (PIGEFAAILLAATLGAMLLCG), 144–164 (LVSVFVSLETLSVASYLLSGY), 179–199 (LLVGSAAAAVFLYGASLLYGI), 220–240 (SALALVFVLSTVAFKIAAVPF), 252–272 (PTPVVAFLSVGSKAAGFALAI), 288–308 (LLFTVLAVLSMSLGNVVALAQ), 314–334 (MLAYSSIGQAGFVMIGLVCGT), 342–362 (VLYMAAYLFMNLGAFACIILF), 386–406 (LGLSLCLLSLGGIPPMLGFFG), 421–441 (LLVTVGLVTSVISIYYYISVI), and 474–494 (VALIFCVLVTAIGGIISNPLF).

The protein belongs to the complex I subunit 2 family. In terms of assembly, NDH-1 can be composed of about 15 different subunits; different subcomplexes with different compositions have been identified which probably have different functions.

It localises to the cellular thylakoid membrane. It catalyses the reaction a plastoquinone + NADH + (n+1) H(+)(in) = a plastoquinol + NAD(+) + n H(+)(out). It carries out the reaction a plastoquinone + NADPH + (n+1) H(+)(in) = a plastoquinol + NADP(+) + n H(+)(out). Functionally, NDH-1 shuttles electrons from an unknown electron donor, via FMN and iron-sulfur (Fe-S) centers, to quinones in the respiratory and/or the photosynthetic chain. The immediate electron acceptor for the enzyme in this species is believed to be plastoquinone. Couples the redox reaction to proton translocation, and thus conserves the redox energy in a proton gradient. Cyanobacterial NDH-1 also plays a role in inorganic carbon-concentration. This is NAD(P)H-quinone oxidoreductase subunit 2 from Prochlorococcus marinus (strain NATL2A).